The chain runs to 360 residues: Glutamate 5-kinase (360 aa).

K11 provides a ligand contact to ATP. Substrate is bound by residues S51, D138, and N150. In terms of domain architecture, PUA spans K278–Y356.

Belongs to the glutamate 5-kinase family.

The protein localises to the cytoplasm. The enzyme catalyses L-glutamate + ATP = L-glutamyl 5-phosphate + ADP. It functions in the pathway amino-acid biosynthesis; L-proline biosynthesis; L-glutamate 5-semialdehyde from L-glutamate: step 1/2. Functionally, catalyzes the transfer of a phosphate group to glutamate to form L-glutamate 5-phosphate. This is Glutamate 5-kinase from Bacteroides thetaiotaomicron (strain ATCC 29148 / DSM 2079 / JCM 5827 / CCUG 10774 / NCTC 10582 / VPI-5482 / E50).